We begin with the raw amino-acid sequence, 328 residues long: 5,10-methylenetetrahydromethanopterin reductase (328 aa).

This sequence belongs to the mer family.

The protein resides in the cytoplasm. The enzyme catalyses 5-methyl-5,6,7,8-tetrahydromethanopterin + oxidized coenzyme F420-(gamma-L-Glu)(n) + H(+) = 5,10-methylenetetrahydromethanopterin + reduced coenzyme F420-(gamma-L-Glu)(n). Its pathway is one-carbon metabolism; methanogenesis from CO(2); methyl-coenzyme M from 5,10-methylene-5,6,7,8-tetrahydromethanopterin: step 1/2. Its function is as follows. Catalyzes the reversible reduction of methylene-H(4)MPT to methyl-H(4)MPT. The protein is 5,10-methylenetetrahydromethanopterin reductase of Methanosarcina mazei (strain ATCC BAA-159 / DSM 3647 / Goe1 / Go1 / JCM 11833 / OCM 88) (Methanosarcina frisia).